Here is an 83-residue protein sequence, read N- to C-terminus: Beta-defensin 19 (83 aa).

A signal peptide spans 1 to 19 (MRLALLLLAILVATELVVS). 3 disulfide bridges follow: Cys27–Cys54, Cys34–Cys48, and Cys38–Cys55.

Belongs to the beta-defensin family. In terms of tissue distribution, specifically expressed in male gonads (Sertoli cells).

It is found in the secreted. Has antibacterial activity. This Mus musculus (Mouse) protein is Beta-defensin 19 (Defb19).